A 31-amino-acid chain; its full sequence is Cuticle protein 54 (31 aa).

A run of 2 repeats spans residues 7–10 and 13–17.

In terms of biological role, component of the cuticle of migratory locust which contains more than 100 different structural proteins. In Locusta migratoria (Migratory locust), this protein is Cuticle protein 54.